A 292-amino-acid polypeptide reads, in one-letter code: Acidic endochitinase (292 aa).

An N-terminal signal peptide occupies residues 1–25 (MAAHKITTTLSIFFLLSSIFRSSDA). The GH18 domain maps to 26 to 292 (AGIAIYWGQN…YSDSIKGSIG (267 aa)). 2 disulfide bridges follow: C45-C92 and C75-C82. Residue E152 is the Proton donor of the active site. A disulfide bridge connects residues C180 and C209.

This sequence belongs to the glycosyl hydrolase 18 family. Chitinase class II subfamily.

It is found in the secreted. It localises to the extracellular space. The enzyme catalyses Random endo-hydrolysis of N-acetyl-beta-D-glucosaminide (1-&gt;4)-beta-linkages in chitin and chitodextrins.. This protein functions as a defense against chitin containing fungal pathogens. This chain is Acidic endochitinase, found in Cucumis sativus (Cucumber).